Reading from the N-terminus, the 343-residue chain is Ribosome production factor 1 (343 aa).

Composition is skewed to basic and acidic residues over residues 1 to 10 (MAEKKGPEAK) and 82 to 91 (EREALGDKAP). 2 disordered regions span residues 1-51 (MAEK…LSEI) and 77-97 (KKRKKEREALGDKAPPKPVPK). In terms of domain architecture, Brix spans 136-319 (PKILITTSDR…LRSLQKGTFD (184 aa)). Positions 297-314 (VGIQELGPRFTLKLRSLQ) are RNA-binding.

It localises to the nucleus. Its subcellular location is the nucleolus. Functionally, may be required for ribosome biogenesis. This chain is Ribosome production factor 1 (rpf1), found in Xenopus laevis (African clawed frog).